The sequence spans 782 residues: DnaJ homolog subfamily C member 16 (782 aa).

An N-terminal signal peptide occupies residues 1 to 25; sequence MEVRKLSISWQFLIVLVLILQILSA. The Cytoplasmic portion of the chain corresponds to 26 to 535; sequence LDFDPYKVLG…DSIFHNNWRE (510 aa). Residues 29–93 enclose the J domain; sequence DPYKVLGVSR…EKRSNYDQYG (65 aa). One can recognise a Thioredoxin domain in the interval 119-247; that stretch reads FYFDESFFHF…LRQFVESLLP (129 aa). Residues 536–556 traverse the membrane as a helical; Anchor for type IV membrane protein segment; that stretch reads MMPLLSLIFSALFILFGTVIV. The Extracellular portion of the chain corresponds to 557–782; the sequence is QAFSDSSDER…FYIPSWPELD (226 aa). The disordered stretch occupies residues 562–593; it reads SSDERESSPPDKEEAQEKTGKTEPSFTKENSS. The segment covering 563-582 has biased composition (basic and acidic residues); that stretch reads SDERESSPPDKEEAQEKTGK. Polar residues predominate over residues 583 to 593; that stretch reads TEPSFTKENSS. A glycan (N-linked (GlcNAc...) asparagine) is linked at Asn631.

The protein localises to the endoplasmic reticulum membrane. Plays an important role in regulating the size of autophagosomes during the formation process. The sequence is that of DnaJ homolog subfamily C member 16 (DNAJC16) from Pongo abelii (Sumatran orangutan).